The sequence spans 438 residues: Cysteine--tRNA ligase (438 aa).

C28 is a binding site for Zn(2+). A 'HIGH' region motif is present at residues 30–40 (PTVYNHLHLGN). Zn(2+)-binding residues include C207, H232, and E236. Positions 264–268 (KMSKS) match the 'KMSKS' region motif. ATP is bound at residue K267.

Belongs to the class-I aminoacyl-tRNA synthetase family. As to quaternary structure, monomer. Requires Zn(2+) as cofactor.

Its subcellular location is the cytoplasm. The enzyme catalyses tRNA(Cys) + L-cysteine + ATP = L-cysteinyl-tRNA(Cys) + AMP + diphosphate. The sequence is that of Cysteine--tRNA ligase from Aster yellows witches'-broom phytoplasma (strain AYWB).